We begin with the raw amino-acid sequence, 201 residues long: Recombination protein RecR (201 aa).

The C4-type zinc finger occupies 60–75 (CKSCGNIDTRNPCTVC). One can recognise a Toprim domain in the interval 83-178 (SIIVVVADVA…KVTRLAHGVP (96 aa)).

It belongs to the RecR family.

Its function is as follows. May play a role in DNA repair. It seems to be involved in an RecBC-independent recombinational process of DNA repair. It may act with RecF and RecO. In Rhodopseudomonas palustris (strain BisB5), this protein is Recombination protein RecR.